The primary structure comprises 147 residues: Leghemoglobin 8 (147 aa).

Residues 2–147 form the Globin domain; sequence GFTEKQESLV…LAASIKKSMS (146 aa). A nitrated tyrosine mark is found at Y25 and Y30. S45 contributes to the heme b binding site. S45 bears the Phosphoserine mark. H62 is a binding site for O2. Heme b is bound by residues K65, H94, and K97. Nitrated tyrosine is present on Y135.

It belongs to the plant globin family. Monomer. Interacts with CAS31 in the cytoplasm; this interaction leads to its protection from denaturation under thermal and drought stresses. In terms of processing, nitrated in effective nodules and particularly in hypoxic conditions; this mechanism may play a protective role in the symbiosis by buffering toxic peroxynitrite NO(2)(-). Nitration level decrease during nodule senescence. Phosphorylation at Ser-45 disrupts the molecular environment of its porphyrin ring oxygen binding pocket, thus leading to a reduced oxygen consumption and to the delivery of oxygen O(2) to symbiosomes. Root nodules.

The protein localises to the cytoplasm. It localises to the nucleus. Leghemoglobin that reversibly binds oxygen O(2) through a pentacoordinated heme iron. In root nodules, facilitates the diffusion of oxygen to the bacteroids while preventing the bacterial nitrogenase from being inactivated by buffering dioxygen, nitric oxide and carbon monoxide, and promoting the formation of reactive oxygen species (ROS, e.g. H(2)O(2)). This role is essential for symbiotic nitrogen fixation (SNF). This chain is Leghemoglobin 8, found in Medicago truncatula (Barrel medic).